A 238-amino-acid chain; its full sequence is Endothelin-3 (238 aa).

An N-terminal signal peptide occupies residues 1–16; sequence MEPGLWLLFGLTVTSA. A propeptide spanning residues 17-94 is cleaved from the precursor; that stretch reads AGFVPCSQSG…AEGAPEHHRS (78 aa). A disordered region spans residues 24–89; sequence QSGDAGRRGV…GQEQAAEGAP (66 aa). Intrachain disulfides connect Cys-97/Cys-111 and Cys-99/Cys-107. A propeptide spanning residues 118 to 238 is cleaved from the precursor; it reads INTPEQTVPY…PRCLFQEGAP (121 aa). Residues 159-173 are endothelin-like; the sequence is CACVGRYDKACLHFC. The segment at 183-219 is disordered; it reads SRTAEKTDKEEEGKVEVKDQQSKQALDLHHPKLMPGS. Residues 185–212 are compositionally biased toward basic and acidic residues; the sequence is TAEKTDKEEEGKVEVKDQQSKQALDLHH.

The protein belongs to the endothelin/sarafotoxin family. As to expression, expressed in trophoblasts and placental stem villi vessels, but not in cultured placental smooth muscle cells.

It localises to the secreted. In terms of biological role, endothelins are endothelium-derived vasoconstrictor peptides. The protein is Endothelin-3 (EDN3) of Homo sapiens (Human).